The sequence spans 301 residues: UDP-N-acetylenolpyruvoylglucosamine reductase (301 aa).

Residues 27 to 194 (RVGGPADVVF…LDAIFEGTPD (168 aa)) enclose the FAD-binding PCMH-type domain. Arginine 172 is an active-site residue. The active-site Proton donor is the serine 223. Residue glutamate 293 is part of the active site.

It belongs to the MurB family. Requires FAD as cofactor.

It localises to the cytoplasm. The catalysed reaction is UDP-N-acetyl-alpha-D-muramate + NADP(+) = UDP-N-acetyl-3-O-(1-carboxyvinyl)-alpha-D-glucosamine + NADPH + H(+). It functions in the pathway cell wall biogenesis; peptidoglycan biosynthesis. In terms of biological role, cell wall formation. This chain is UDP-N-acetylenolpyruvoylglucosamine reductase, found in Caulobacter vibrioides (strain NA1000 / CB15N) (Caulobacter crescentus).